The chain runs to 97 residues: Co-chaperonin GroES (97 aa).

The protein belongs to the GroES chaperonin family. Heptamer of 7 subunits arranged in a ring. Interacts with the chaperonin GroEL.

The protein resides in the cytoplasm. Together with the chaperonin GroEL, plays an essential role in assisting protein folding. The GroEL-GroES system forms a nano-cage that allows encapsulation of the non-native substrate proteins and provides a physical environment optimized to promote and accelerate protein folding. GroES binds to the apical surface of the GroEL ring, thereby capping the opening of the GroEL channel. This Stenotrophomonas maltophilia (Pseudomonas maltophilia) protein is Co-chaperonin GroES.